We begin with the raw amino-acid sequence, 763 residues long: ATP-dependent RNA helicase SUPV3L1, mitochondrial (763 aa).

The N-terminal 65 residues, 1 to 65 (MSVNRCIYLL…RPLDTSLFIP (65 aa)), are a transit peptide targeting the mitochondrion. Residues 39–58 (RRTFDKLSTRHSSSGSSRPL) are disordered. The Helicase ATP-binding domain occupies 192–332 (EARAIQRKIV…AVDFITELMF (141 aa)). 205-212 (GPTNSGKT) lines the ATP pocket. Residues 354-519 (HAVESLDNLK…PTAEQIEMFA (166 aa)) form the Helicase C-terminal domain. 2 disordered regions span residues 679-721 (DSQP…KSSL) and 742-763 (EWAR…RKKK). Over residues 680–697 (SQPTDTESNSSSTVPESE) the composition is skewed to polar residues.

This sequence belongs to the helicase family. Mg(2+) serves as cofactor. Mn(2+) is required as a cofactor.

The protein localises to the nucleus. It is found in the mitochondrion matrix. The protein resides in the mitochondrion nucleoid. The catalysed reaction is ATP + H2O = ADP + phosphate + H(+). Functionally, major helicase player in mitochondrial RNA metabolism. Component of the mitochondrial degradosome (mtEXO) complex, that degrades 3' overhang double-stranded RNA with a 3'-to-5' directionality in an ATP-dependent manner. ATPase and ATP-dependent multisubstrate helicase, able to unwind double-stranded (ds) DNA and RNA, and RNA/DNA heteroduplexes in the 5'-to-3' direction. Plays a role in the RNA surveillance system in mitochondria; regulates the stability of mature mRNAs, the removal of aberrantly formed mRNAs and the rapid degradation of non coding processing intermediates. Also implicated in recombination and chromatin maintenance pathways. May protect cells from apoptosis. Associates with mitochondrial DNA. This Danio rerio (Zebrafish) protein is ATP-dependent RNA helicase SUPV3L1, mitochondrial (supv3l1).